The chain runs to 101 residues: CRISPR-associated endoribonuclease Cas2 (101 aa).

Asp-8 is a Mg(2+) binding site.

This sequence belongs to the CRISPR-associated endoribonuclease Cas2 protein family. As to quaternary structure, homodimer, forms a heterotetramer with a Cas1 homodimer. Requires Mg(2+) as cofactor.

In terms of biological role, CRISPR (clustered regularly interspaced short palindromic repeat), is an adaptive immune system that provides protection against mobile genetic elements (viruses, transposable elements and conjugative plasmids). CRISPR clusters contain sequences complementary to antecedent mobile elements and target invading nucleic acids. CRISPR clusters are transcribed and processed into CRISPR RNA (crRNA). Functions as a ssRNA-specific endoribonuclease. Involved in the integration of spacer DNA into the CRISPR cassette. The polypeptide is CRISPR-associated endoribonuclease Cas2 (Parvibaculum lavamentivorans (strain DS-1 / DSM 13023 / NCIMB 13966)).